The sequence spans 70 residues: Sec-independent protein translocase protein TatA (70 aa).

Residues 1 to 21 (MAIGVNQLLIILVIIVLLFGA) form a helical membrane-spanning segment.

It belongs to the TatA/E family. In terms of assembly, the Tat system comprises two distinct complexes: a TatABC complex, containing multiple copies of TatA, TatB and TatC subunits, and a separate TatA complex, containing only TatA subunits. Substrates initially bind to the TatABC complex, which probably triggers association of the separate TatA complex to form the active translocon.

It localises to the cell inner membrane. Functionally, part of the twin-arginine translocation (Tat) system that transports large folded proteins containing a characteristic twin-arginine motif in their signal peptide across membranes. TatA could form the protein-conducting channel of the Tat system. This chain is Sec-independent protein translocase protein TatA, found in Campylobacter curvus (strain 525.92).